The following is a 726-amino-acid chain: Dipeptidyl-peptidase 5 (726 aa).

Positions Met1–Ala19 are cleaved as a signal peptide. 2 N-linked (GlcNAc...) asparagine glycosylation sites follow: Asn96 and Asn252. The tract at residues Ala269–Pro291 is disordered. Ser558 functions as the Charge relay system in the catalytic mechanism. N-linked (GlcNAc...) asparagine glycosylation is present at Asn605. Catalysis depends on charge relay system residues Asp641 and His673. A glycan (N-linked (GlcNAc...) asparagine) is linked at Asn699.

This sequence belongs to the peptidase S9C family.

Its subcellular location is the secreted. This Arthroderma benhamiae (Trichophyton mentagrophytes) protein is Dipeptidyl-peptidase 5 (DPPV).